A 319-amino-acid polypeptide reads, in one-letter code: Acetyl-coenzyme A carboxylase carboxyl transferase subunit alpha (319 aa).

Residues His38–Ala293 enclose the CoA carboxyltransferase C-terminal domain.

This sequence belongs to the AccA family. In terms of assembly, acetyl-CoA carboxylase is a heterohexamer composed of biotin carboxyl carrier protein (AccB), biotin carboxylase (AccC) and two subunits each of ACCase subunit alpha (AccA) and ACCase subunit beta (AccD).

Its subcellular location is the cytoplasm. The catalysed reaction is N(6)-carboxybiotinyl-L-lysyl-[protein] + acetyl-CoA = N(6)-biotinyl-L-lysyl-[protein] + malonyl-CoA. It participates in lipid metabolism; malonyl-CoA biosynthesis; malonyl-CoA from acetyl-CoA: step 1/1. In terms of biological role, component of the acetyl coenzyme A carboxylase (ACC) complex. First, biotin carboxylase catalyzes the carboxylation of biotin on its carrier protein (BCCP) and then the CO(2) group is transferred by the carboxyltransferase to acetyl-CoA to form malonyl-CoA. In Stenotrophomonas maltophilia (strain K279a), this protein is Acetyl-coenzyme A carboxylase carboxyl transferase subunit alpha.